We begin with the raw amino-acid sequence, 887 residues long: Endoglucanase 1 (887 aa).

Residues 1-55 (MRLVNSLGRRKILLILAVIVAFSTVLLFAKLWGRKTSSTLDEVGSKTHGDLTAEN) form the signal peptide. A disordered region spans residues 40–66 (LDEVGSKTHGDLTAENKNGGYLPEEEI). The span at 43–53 (VGSKTHGDLTA) shows a compositional bias: basic and acidic residues. The catalytic stretch occupies residues 56-518 (KNGGYLPEEE…AKMYKLYGGS (463 aa)). Catalysis depends on Asp131, which acts as the Nucleophile. Residues 441–460 (ENPPKRPHHRTAHGSWADSQ) form a disordered region. Residues His448, Asp486, and Glu495 contribute to the active site. One can recognise a CBM3 1 domain in the interval 529 to 684 (VPEDEIFVEA…GVLVFGREPG (156 aa)). The tract at residues 684–730 (GSASKSTSKDNGLSKATPTVKTESQPTAKHTQNPASDFKTPANQNSV) is disordered. Positions 686 to 729 (ASKSTSKDNGLSKATPTVKTESQPTAKHTQNPASDFKTPANQNS) are enriched in polar residues. A CBM3 2 domain is found at 736-887 (IKGEVVLQYA…SNKLVYGKEP (152 aa)).

This sequence belongs to the glycosyl hydrolase 9 (cellulase E) family.

It carries out the reaction Endohydrolysis of (1-&gt;4)-beta-D-glucosidic linkages in cellulose, lichenin and cereal beta-D-glucans.. Its pathway is glycan metabolism; cellulose degradation. Functionally, this enzyme catalyzes the endohydrolysis of 1,4-beta-glucosidic linkages in cellulose, lichenin and cereal beta-D-glucans. Principally active against barley beta-glucan. The chain is Endoglucanase 1 (celI) from Acetivibrio thermocellus (strain ATCC 27405 / DSM 1237 / JCM 9322 / NBRC 103400 / NCIMB 10682 / NRRL B-4536 / VPI 7372) (Clostridium thermocellum).